Consider the following 676-residue polypeptide: Protein kinase C delta type (676 aa).

The region spanning 1 to 106 is the C2 domain; the sequence is MAPFLRIAFN…KNNGKAEFWL (106 aa). Thr-43 and Thr-50 each carry phosphothreonine. Residue Tyr-64 is modified to Phosphotyrosine. Ser-130 is subject to Phosphoserine. Position 141 is a phosphothreonine (Thr-141). Phosphotyrosine is present on Tyr-155. The Phorbol-ester/DAG-type 1 zinc finger occupies 158-208; it reads NHEFIATFFGQPTFCSVCKDFVWGLNKQGYKCRQCNAAIHKKCIDKIIGRC. A Phosphothreonine modification is found at Thr-218. The Phorbol-ester/DAG-type 2 zinc-finger motif lies at 230 to 280; the sequence is PHRFKVHNYMSPTFCDHCGSLLWGLVKQGLKCEDCGMNVHHKCREKVANLC. Phosphoserine; by autocatalysis is present on residues Ser-299, Ser-302, and Ser-304. Residue Ser-307 is modified to Phosphoserine. Tyr-313 is modified (phosphotyrosine). The residue at position 334 (Tyr-334) is a Phosphotyrosine; by SRC. One can recognise a Protein kinase domain in the interval 349–603; it reads FIFHKVLGKG…TGNIKIHPFF (255 aa). Residue 355–363 coordinates ATP; that stretch reads LGKGSFGKV. Tyr-374 carries the phosphotyrosine modification. Lys-378 provides a ligand contact to ATP. Residue Thr-451 is modified to Phosphothreonine. The active-site Proton acceptor is the Asp-473. Phosphoserine is present on residues Ser-503 and Ser-506. A Phosphothreonine; by autocatalysis modification is found at Thr-507. Phosphotyrosine is present on Tyr-567. Residues 604-675 form the AGC-kinase C-terminal domain; that stretch reads KTINWTLLEK…VNPKFEHLLE (72 aa). 4 positions are modified to phosphoserine: Ser-645, Ser-654, Ser-658, and Ser-664.

The protein belongs to the protein kinase superfamily. AGC Ser/Thr protein kinase family. PKC subfamily. In terms of assembly, interacts with PDPK1 (via N-terminal region). Interacts with RAD9A. Interacts with CDCP1. Interacts with MUC1. Interacts with VASP. Interacts with CAVIN3. Interacts with PRKD2 (via N-terminus and zing-finger domain 1 and 2) in response to oxidative stress; the interaction is independent of PRKD2 tyrosine phosphorylation. Interacts with PLSC3; interaction is enhanced by UV irradiation. Interacts with PRKCH upstream open reading frame 2; the interaction leads to inhibition of kinase activity. Autophosphorylated and/or phosphorylated at Thr-507, within the activation loop; phosphorylation at Thr-507 is not a prerequisite for enzymatic activity. Autophosphorylated at Ser-299, Ser-302 and Ser-304. Upon TNFSF10/TRAIL treatment, phosphorylated at Tyr-155; phosphorylation is required for its translocation to the endoplasmic reticulum and cleavage by caspase-3. Phosphorylated at Tyr-313, Tyr-334 and Tyr-567; phosphorylation of Tyr-313 and Tyr-567 following thrombin or zymosan stimulation potentiates its kinase activity. Phosphorylated by protein kinase PDPK1; phosphorylation is inhibited by the apoptotic C-terminal cleavage product of PKN2. Phosphorylated at Tyr-313 through a SYK and SRC mechanism downstream of C-type lectin receptors activation, promoting its activation. Post-translationally, proteolytically cleaved into a catalytic subunit and a regulatory subunit by caspase-3 during apoptosis which results in kinase activation.

It localises to the cytoplasm. It is found in the perinuclear region. Its subcellular location is the nucleus. The protein resides in the cell membrane. The protein localises to the mitochondrion. It localises to the endomembrane system. The enzyme catalyses L-seryl-[protein] + ATP = O-phospho-L-seryl-[protein] + ADP + H(+). It carries out the reaction L-threonyl-[protein] + ATP = O-phospho-L-threonyl-[protein] + ADP + H(+). It catalyses the reaction L-tyrosyl-[protein] + ATP = O-phospho-L-tyrosyl-[protein] + ADP + H(+). With respect to regulation, novel PKCs (PRKCD, PRKCE, PRKCH and PRKCQ) are calcium-insensitive, but activated by diacylglycerol (DAG) and phosphatidylserine. Three specific sites; Thr-507 (activation loop of the kinase domain), Ser-645 (turn motif) and Ser-664 (hydrophobic region), need to be phosphorylated for its full activation. Activated by caspase-3 (CASP3) cleavage during apoptosis. After cleavage, the pseudosubstrate motif in the regulatory subunit is released from the substrate recognition site of the catalytic subunit, which enables PRKCD to become constitutively activated. The catalytic subunit which displays properties of a sphingosine-dependent protein kinase is activated by D-erythro-sphingosine (Sph) or N,N-dimethyl-D-erythrosphingosine (DMS) or N,N,N-trimethyl-D-erythrosphingosine (TMS), but not by ceramide or Sph-1-P and is strongly inhibited by phosphatidylserine. Inhibited by PRKCH upstream open reading frame 2. Its function is as follows. Calcium-independent, phospholipid- and diacylglycerol (DAG)-dependent serine/threonine-protein kinase that plays contrasting roles in cell death and cell survival by functioning as a pro-apoptotic protein during DNA damage-induced apoptosis, but acting as an anti-apoptotic protein during cytokine receptor-initiated cell death, is involved in tumor suppression as well as survival of several cancers, is required for oxygen radical production by NADPH oxidase and acts as positive or negative regulator in platelet functional responses. Negatively regulates B cell proliferation and also has an important function in self-antigen induced B cell tolerance induction. Upon DNA damage, activates the promoter of the death-promoting transcription factor BCLAF1/Btf to trigger BCLAF1-mediated p53/TP53 gene transcription and apoptosis. In response to oxidative stress, interact with and activate CHUK/IKKA in the nucleus, causing the phosphorylation of p53/TP53. In the case of ER stress or DNA damage-induced apoptosis, can form a complex with the tyrosine-protein kinase ABL1 which trigger apoptosis independently of p53/TP53. In cytosol can trigger apoptosis by activating MAPK11 or MAPK14, inhibiting AKT1 and decreasing the level of X-linked inhibitor of apoptosis protein (XIAP), whereas in nucleus induces apoptosis via the activation of MAPK8 or MAPK9. Upon ionizing radiation treatment, is required for the activation of the apoptosis regulators BAX and BAK, which trigger the mitochondrial cell death pathway. Can phosphorylate MCL1 and target it for degradation which is sufficient to trigger for BAX activation and apoptosis. Is required for the control of cell cycle progression both at G1/S and G2/M phases. Mediates phorbol 12-myristate 13-acetate (PMA)-induced inhibition of cell cycle progression at G1/S phase by up-regulating the CDK inhibitor CDKN1A/p21 and inhibiting the cyclin CCNA2 promoter activity. In response to UV irradiation can phosphorylate CDK1, which is important for the G2/M DNA damage checkpoint activation. Can protect glioma cells from the apoptosis induced by TNFSF10/TRAIL, probably by inducing increased phosphorylation and subsequent activation of AKT1. Is highly expressed in a number of cancer cells and promotes cell survival and resistance against chemotherapeutic drugs by inducing cyclin D1 (CCND1) and hyperphosphorylation of RB1, and via several pro-survival pathways, including NF-kappa-B, AKT1 and MAPK1/3 (ERK1/2). Involved in antifungal immunity by mediating phosphorylation and activation of CARD9 downstream of C-type lectin receptors activation, promoting interaction between CARD9 and BCL10, followed by activation of NF-kappa-B and MAP kinase p38 pathways. Can also act as tumor suppressor upon mitogenic stimulation with PMA or TPA. In N-formyl-methionyl-leucyl-phenylalanine (fMLP)-treated cells, is required for NCF1 (p47-phox) phosphorylation and activation of NADPH oxidase activity, and regulates TNF-elicited superoxide anion production in neutrophils, by direct phosphorylation and activation of NCF1 or indirectly through MAPK1/3 (ERK1/2) signaling pathways. May also play a role in the regulation of NADPH oxidase activity in eosinophil after stimulation with IL5, leukotriene B4 or PMA. In collagen-induced platelet aggregation, acts a negative regulator of filopodia formation and actin polymerization by interacting with and negatively regulating VASP phosphorylation. Downstream of PAR1, PAR4 and CD36/GP4 receptors, regulates differentially platelet dense granule secretion; acts as a positive regulator in PAR-mediated granule secretion, whereas it negatively regulates CD36/GP4-mediated granule release. Phosphorylates MUC1 in the C-terminal and regulates the interaction between MUC1 and beta-catenin. The catalytic subunit phosphorylates 14-3-3 proteins (YWHAB, YWHAZ and YWHAH) in a sphingosine-dependent fashion. Phosphorylates ELAVL1 in response to angiotensin-2 treatment. Phosphorylates mitochondrial phospholipid scramblase 3 (PLSCR3), resulting in increased cardiolipin expression on the mitochondrial outer membrane which facilitates apoptosis. Phosphorylates SMPD1 which induces SMPD1 secretion. The chain is Protein kinase C delta type from Homo sapiens (Human).